The following is a 286-amino-acid chain: Acetyl-coenzyme A carboxylase carboxyl transferase subunit beta (286 aa).

Residues 23-286 (IWVKCNNCNQ…ITNKPEPKKE (264 aa)) form the CoA carboxyltransferase N-terminal domain. Zn(2+)-binding residues include cysteine 27, cysteine 30, cysteine 46, and cysteine 49. The C4-type zinc finger occupies 27–49 (CNNCNQMIYKIELEKNLEVCPKC).

This sequence belongs to the AccD/PCCB family. As to quaternary structure, acetyl-CoA carboxylase is a heterohexamer composed of biotin carboxyl carrier protein (AccB), biotin carboxylase (AccC) and two subunits each of ACCase subunit alpha (AccA) and ACCase subunit beta (AccD). It depends on Zn(2+) as a cofactor.

The protein localises to the cytoplasm. It carries out the reaction N(6)-carboxybiotinyl-L-lysyl-[protein] + acetyl-CoA = N(6)-biotinyl-L-lysyl-[protein] + malonyl-CoA. It functions in the pathway lipid metabolism; malonyl-CoA biosynthesis; malonyl-CoA from acetyl-CoA: step 1/1. Functionally, component of the acetyl coenzyme A carboxylase (ACC) complex. Biotin carboxylase (BC) catalyzes the carboxylation of biotin on its carrier protein (BCCP) and then the CO(2) group is transferred by the transcarboxylase to acetyl-CoA to form malonyl-CoA. This Wigglesworthia glossinidia brevipalpis protein is Acetyl-coenzyme A carboxylase carboxyl transferase subunit beta.